A 360-amino-acid polypeptide reads, in one-letter code: Histidinol-phosphate aminotransferase (360 aa).

An N6-(pyridoxal phosphate)lysine modification is found at Lys-218.

The protein belongs to the class-II pyridoxal-phosphate-dependent aminotransferase family. Histidinol-phosphate aminotransferase subfamily. In terms of assembly, homodimer. Pyridoxal 5'-phosphate is required as a cofactor.

The enzyme catalyses L-histidinol phosphate + 2-oxoglutarate = 3-(imidazol-4-yl)-2-oxopropyl phosphate + L-glutamate. It functions in the pathway amino-acid biosynthesis; L-histidine biosynthesis; L-histidine from 5-phospho-alpha-D-ribose 1-diphosphate: step 7/9. The polypeptide is Histidinol-phosphate aminotransferase (Chlorobium phaeovibrioides (strain DSM 265 / 1930) (Prosthecochloris vibrioformis (strain DSM 265))).